Here is a 100-residue protein sequence, read N- to C-terminus: Large ribosomal subunit protein bL21 (100 aa).

The protein belongs to the bacterial ribosomal protein bL21 family. In terms of assembly, part of the 50S ribosomal subunit. Contacts protein L20.

Functionally, this protein binds to 23S rRNA in the presence of protein L20. The polypeptide is Large ribosomal subunit protein bL21 (Wolbachia sp. subsp. Drosophila simulans (strain wRi)).